Reading from the N-terminus, the 504-residue chain is Apolipoprotein N-acyltransferase (504 aa).

6 helical membrane-spanning segments follow: residues 6 to 26 (LALT…YALV), 47 to 67 (ALYG…WVFV), 83 to 103 (LTAL…WLGV), 105 to 125 (AGGG…WVVT), 153 to 173 (IAPV…AGLL), and 186 to 206 (FALL…KVQW). The 239-residue stretch at 219–457 (LQGNVPQDQK…REALTGMMQP (239 aa)) folds into the CN hydrolase domain. The Proton acceptor role is filled by Glu-258. Lys-317 is an active-site residue. Cys-369 acts as the Nucleophile in catalysis. The chain crosses the membrane as a helical span at residues 465–485 (ALWGDWPAIGLCAGIVGICFA).

It belongs to the CN hydrolase family. Apolipoprotein N-acyltransferase subfamily.

Its subcellular location is the cell inner membrane. The enzyme catalyses N-terminal S-1,2-diacyl-sn-glyceryl-L-cysteinyl-[lipoprotein] + a glycerophospholipid = N-acyl-S-1,2-diacyl-sn-glyceryl-L-cysteinyl-[lipoprotein] + a 2-acyl-sn-glycero-3-phospholipid + H(+). Its pathway is protein modification; lipoprotein biosynthesis (N-acyl transfer). In terms of biological role, catalyzes the phospholipid dependent N-acylation of the N-terminal cysteine of apolipoprotein, the last step in lipoprotein maturation. This chain is Apolipoprotein N-acyltransferase, found in Methylococcus capsulatus (strain ATCC 33009 / NCIMB 11132 / Bath).